We begin with the raw amino-acid sequence, 220 residues long: UPF0502 protein VVA1225 (220 aa).

It belongs to the UPF0502 family.

The polypeptide is UPF0502 protein VVA1225 (Vibrio vulnificus (strain YJ016)).